A 313-amino-acid chain; its full sequence is Olfactory receptor 4Q3 (313 aa).

At Met-1 to Leu-25 the chain is on the extracellular side. Asn-8 carries N-linked (GlcNAc...) asparagine glycosylation. Residues Phe-26–Val-49 traverse the membrane as a helical segment. Residues Gln-50–Ser-58 are Cytoplasmic-facing. Residues Pro-59–Pro-80 traverse the membrane as a helical segment. Residues Lys-81 to Gln-101 are Extracellular-facing. Cysteines 98 and 190 form a disulfide. A helical transmembrane segment spans residues Ile-102–Tyr-121. The Cytoplasmic segment spans residues Asp-122 to Gln-140. Residues Leu-141–Met-159 form a helical membrane-spanning segment. Residues Gln-160–Val-196 lie on the Extracellular side of the membrane. The chain crosses the membrane as a helical span at residues Glu-197–Ala-220. The Cytoplasmic portion of the chain corresponds to Ile-221–Lys-236. Residues Val-237–Tyr-259 form a helical membrane-spanning segment. Topologically, residues Leu-260–Lys-270 are extracellular. The helical transmembrane segment at Ile-271–Leu-290 threads the bilayer. The Cytoplasmic segment spans residues Arg-291 to Cys-313.

This sequence belongs to the G-protein coupled receptor 1 family.

Its subcellular location is the cell membrane. In terms of biological role, odorant receptor. This is Olfactory receptor 4Q3 (OR4Q3) from Homo sapiens (Human).